The following is a 1433-amino-acid chain: DNA polymerase III PolC-type (1433 aa).

The region spanning 419–575 is the Exonuclease domain; the sequence is FVVFDVETTG…YDAEATGHLL (157 aa).

Belongs to the DNA polymerase type-C family. PolC subfamily.

The protein localises to the cytoplasm. The enzyme catalyses DNA(n) + a 2'-deoxyribonucleoside 5'-triphosphate = DNA(n+1) + diphosphate. Required for replicative DNA synthesis. This DNA polymerase also exhibits 3' to 5' exonuclease activity. The chain is DNA polymerase III PolC-type from Halalkalibacterium halodurans (strain ATCC BAA-125 / DSM 18197 / FERM 7344 / JCM 9153 / C-125) (Bacillus halodurans).